The sequence spans 524 residues: Nickel-binding periplasmic protein (524 aa).

The N-terminal stretch at 1-22 (MLSTLRRTLFALLACASFIVHA) is a signal peptide.

Belongs to the bacterial solute-binding protein 5 family.

The protein resides in the periplasm. In terms of biological role, involved in a nickel transport system, probably represents the nickel binder. The chain is Nickel-binding periplasmic protein (nikA) from Escherichia coli (strain K12).